A 167-amino-acid polypeptide reads, in one-letter code: Translationally-controlled tumor protein homolog (167 aa).

The TCTP domain occupies 1–167 (MIIYKDIFSG…WKHGIDEEKI (167 aa)).

Belongs to the TCTP family.

It is found in the cytoplasm. Its subcellular location is the cytoskeleton. Its function is as follows. Involved in protein synthesis. Involved in microtubule stabilization. In Candida glabrata (strain ATCC 2001 / BCRC 20586 / JCM 3761 / NBRC 0622 / NRRL Y-65 / CBS 138) (Yeast), this protein is Translationally-controlled tumor protein homolog.